Reading from the N-terminus, the 1268-residue chain is ATP-dependent helicase/nuclease subunit A (1268 aa).

Residues 3 to 476 (TKWTEEQELA…IMLYKNFRSR (474 aa)) form the UvrD-like helicase ATP-binding domain. 24-31 (AAAGSGKT) provides a ligand contact to ATP. One can recognise a UvrD-like helicase C-terminal domain in the interval 528 to 824 (IENLKVAGDI…RIMSIHKSKG (297 aa)).

This sequence belongs to the helicase family. AddA subfamily. As to quaternary structure, heterodimer of AddA and AddB/RexB. The cofactor is Mg(2+).

It catalyses the reaction Couples ATP hydrolysis with the unwinding of duplex DNA by translocating in the 3'-5' direction.. It carries out the reaction ATP + H2O = ADP + phosphate + H(+). Functionally, the heterodimer acts as both an ATP-dependent DNA helicase and an ATP-dependent, dual-direction single-stranded exonuclease. Recognizes the chi site generating a DNA molecule suitable for the initiation of homologous recombination. The AddA nuclease domain is required for chi fragment generation; this subunit has the helicase and 3' -&gt; 5' nuclease activities. The chain is ATP-dependent helicase/nuclease subunit A from Clostridium perfringens (strain 13 / Type A).